Here is a 482-residue protein sequence, read N- to C-terminus: tRNA sulfurtransferase (482 aa).

A THUMP domain is found at 61 to 165; sequence VQICDALTRI…QDVLILVKAR (105 aa). Residues 183-184, K265, G287, and Q296 each bind ATP; that span reads LI. Cysteines 344 and 456 form a disulfide. In terms of domain architecture, Rhodanese spans 404 to 482; it reads FAPTDVLLDI…GFDNVKVYRP (79 aa). Residue C456 is the Cysteine persulfide intermediate of the active site.

This sequence belongs to the ThiI family.

The protein resides in the cytoplasm. The catalysed reaction is [ThiI sulfur-carrier protein]-S-sulfanyl-L-cysteine + a uridine in tRNA + 2 reduced [2Fe-2S]-[ferredoxin] + ATP + H(+) = [ThiI sulfur-carrier protein]-L-cysteine + a 4-thiouridine in tRNA + 2 oxidized [2Fe-2S]-[ferredoxin] + AMP + diphosphate. It catalyses the reaction [ThiS sulfur-carrier protein]-C-terminal Gly-Gly-AMP + S-sulfanyl-L-cysteinyl-[cysteine desulfurase] + AH2 = [ThiS sulfur-carrier protein]-C-terminal-Gly-aminoethanethioate + L-cysteinyl-[cysteine desulfurase] + A + AMP + 2 H(+). Its pathway is cofactor biosynthesis; thiamine diphosphate biosynthesis. Functionally, catalyzes the ATP-dependent transfer of a sulfur to tRNA to produce 4-thiouridine in position 8 of tRNAs, which functions as a near-UV photosensor. Also catalyzes the transfer of sulfur to the sulfur carrier protein ThiS, forming ThiS-thiocarboxylate. This is a step in the synthesis of thiazole, in the thiamine biosynthesis pathway. The sulfur is donated as persulfide by IscS. The protein is tRNA sulfurtransferase of Photorhabdus laumondii subsp. laumondii (strain DSM 15139 / CIP 105565 / TT01) (Photorhabdus luminescens subsp. laumondii).